The primary structure comprises 252 residues: Isoprenyl transferase (252 aa).

Residue aspartate 32 is part of the active site. Aspartate 32 is a binding site for Mg(2+). Residues 33 to 36 (GNGR), tryptophan 37, arginine 45, histidine 49, and 77 to 79 (STE) contribute to the substrate site. The active-site Proton acceptor is asparagine 80. Residues tryptophan 81, arginine 83, arginine 200, and 206 to 208 (RLS) contribute to the substrate site. Residue glutamate 219 participates in Mg(2+) binding.

This sequence belongs to the UPP synthase family. As to quaternary structure, homodimer. Requires Mg(2+) as cofactor.

Its function is as follows. Catalyzes the condensation of isopentenyl diphosphate (IPP) with allylic pyrophosphates generating different type of terpenoids. This is Isoprenyl transferase from Listeria monocytogenes serotype 4b (strain F2365).